The sequence spans 1197 residues: Serine/threonine-protein kinase pakA (1197 aa).

Disordered stretches follow at residues 1–96 (MEEK…PIYR), 328–383 (QKED…KNID), 430–468 (REEE…EQRN), 485–543 (EEEE…NLMG), and 562–819 (NSSG…RVGT). A compositionally biased stretch (basic and acidic residues) spans 19–30 (QKFEQFLDKTDK). Positions 34–49 (ATRNNYRGPVSSSTGI) are enriched in polar residues. A compositionally biased stretch (basic and acidic residues) spans 51–69 (NDKEKKSHSYFKVREEGSN). Residues 70–79 (KRPSSFSASN) are compositionally biased toward polar residues. Composition is skewed to low complexity over residues 80-94 (PITP…SSPI) and 346-381 (NNNN…NNKN). A compositionally biased stretch (basic and acidic residues) spans 439–458 (RVERELASRRRQEEDRIKRE). A compositionally biased stretch (low complexity) spans 494-523 (SQLQSSQQQQKSSSTQRSSNTVTSTSSSST). A compositionally biased stretch (polar residues) spans 524-536 (GGDSNPSTSQKPT). A Phosphothreonine; by PKB modification is found at Thr-585. Positions 593 to 615 (SENTPLVSSIDNNGVNNKMSRSH) are enriched in polar residues. Low complexity-rich tracts occupy residues 636-653 (NVNN…NNNH) and 671-707 (SSSM…SSPT). Residues 718–727 (TTSTGSTRKG) are compositionally biased toward polar residues. Residues 728–737 (SISEREDKKK) are compositionally biased toward basic and acidic residues. Over residues 739-756 (SSSSTSSSSSSNGGLSSS) the composition is skewed to low complexity. Basic and acidic residues predominate over residues 757–790 (GKDHKKDHSSEEKEKEKKSFFNKLFSKEKKDHHS). The CRIB domain maps to 817–830 (VGTPFNVKHDVHVN). Residues 911–1164 (YYNINKIGEG…SSSLLHHPFL (254 aa)) enclose the Protein kinase domain. ATP is bound by residues 917-925 (IGEGGAGEV) and Lys-940. Asp-1032 acts as the Proton acceptor in catalysis.

This sequence belongs to the protein kinase superfamily. STE Ser/Thr protein kinase family. STE20 subfamily. It depends on Mg(2+) as a cofactor. In terms of processing, phosphorylation on Thr-585 results in cAMP-mediated activation and localization to the cytoskeleton. As to expression, colocalizes with myosin II to the cleavage furrow of cells undergoing cytokinesis and the posterior cortex of polarized cells.

It is found in the cytoplasm. The protein localises to the cytosol. Its subcellular location is the cytoskeleton. It catalyses the reaction L-seryl-[protein] + ATP = O-phospho-L-seryl-[protein] + ADP + H(+). The catalysed reaction is L-threonyl-[protein] + ATP = O-phospho-L-threonyl-[protein] + ADP + H(+). Its function is as follows. Regulator of the myosin II component of the cytoskeleton: required for regulation of cytokinesis. Functions during chemotaxis, required for maintaining the direction of cell movement, suppressing lateral pseudopod extension, and proper retraction of the posterior of chemotaxing cells. The polypeptide is Serine/threonine-protein kinase pakA (pakA) (Dictyostelium discoideum (Social amoeba)).